A 128-amino-acid chain; its full sequence is MRHRKSGRQLNRNSSHRQAMFRNMAGSLVRHEIIKTTLPKAKELRRVVEPLITLAKTDSVANRRLAFARTRDNEIVAKLFNELGPRFASRAGGYTRILKCGFRAGDNAPMAYIELVDRPEAQAEAVAE.

The protein belongs to the bacterial ribosomal protein bL17 family. In terms of assembly, part of the 50S ribosomal subunit. Contacts protein L32.

This is Large ribosomal subunit protein bL17 from Erwinia tasmaniensis (strain DSM 17950 / CFBP 7177 / CIP 109463 / NCPPB 4357 / Et1/99).